Consider the following 254-residue polypeptide: Alcohol dehydrogenase 1 (254 aa).

10–33 (FVAGLGGIGFDTSREIVKSGPKNL) is an NAD(+) binding site. Ser-138 serves as a coordination point for substrate. Tyr-151 serves as the catalytic Proton acceptor.

It belongs to the short-chain dehydrogenases/reductases (SDR) family. In terms of assembly, homodimer.

The enzyme catalyses a primary alcohol + NAD(+) = an aldehyde + NADH + H(+). The catalysed reaction is a secondary alcohol + NAD(+) = a ketone + NADH + H(+). The protein is Alcohol dehydrogenase 1 (Adh1) of Drosophila navojoa (Fruit fly).